A 242-amino-acid chain; its full sequence is Ribonuclease 3 (242 aa).

In terms of domain architecture, RNase III spans 12 to 139 (ANELLEALGT…LIGATFLEHG (128 aa)). Glu51 provides a ligand contact to Mg(2+). Residue Asp55 is part of the active site. Asp125 and Glu128 together coordinate Mg(2+). The active site involves Glu128. In terms of domain architecture, DRBM spans 165 to 236 (LDWKTSLTVK…AEAGWKSLDS (72 aa)).

The protein belongs to the ribonuclease III family. As to quaternary structure, homodimer. It depends on Mg(2+) as a cofactor.

It localises to the cytoplasm. The catalysed reaction is Endonucleolytic cleavage to 5'-phosphomonoester.. In terms of biological role, digests double-stranded RNA. Involved in the processing of primary rRNA transcript to yield the immediate precursors to the large and small rRNAs (23S and 16S). Processes some mRNAs, and tRNAs when they are encoded in the rRNA operon. Processes pre-crRNA and tracrRNA of type II CRISPR loci if present in the organism. This Bifidobacterium longum (strain NCC 2705) protein is Ribonuclease 3.